The chain runs to 342 residues: tRNA N6-adenosine threonylcarbamoyltransferase (342 aa).

Fe cation contacts are provided by H119 and H123. Substrate contacts are provided by residues 142–146, D175, G188, and N282; that span reads VVSGG. D310 lines the Fe cation pocket.

Belongs to the KAE1 / TsaD family. Fe(2+) is required as a cofactor.

The protein localises to the cytoplasm. The enzyme catalyses L-threonylcarbamoyladenylate + adenosine(37) in tRNA = N(6)-L-threonylcarbamoyladenosine(37) in tRNA + AMP + H(+). Its function is as follows. Required for the formation of a threonylcarbamoyl group on adenosine at position 37 (t(6)A37) in tRNAs that read codons beginning with adenine. Is involved in the transfer of the threonylcarbamoyl moiety of threonylcarbamoyl-AMP (TC-AMP) to the N6 group of A37, together with TsaE and TsaB. TsaD likely plays a direct catalytic role in this reaction. The protein is tRNA N6-adenosine threonylcarbamoyltransferase of Moorella thermoacetica (strain ATCC 39073 / JCM 9320).